The chain runs to 381 residues: MKKIYFIAGEASGDFAGGRIIRNLKADKELKIIGIGGRNMEEAGNFESLFPISEINLMGFFEVIPHIFRIKKLINKTVEDIIDNKPDILITIDSPGFTYRVAAKVRERLPELKMIHIVAPSVWAYKEGRAAKYAKIYNCLFALLPFEPPYFTKVGLDCRYIGHPIMEQEFYSDKVALRQELEIDEDTKVLCVTLGSRKGEILRHLPIFIPAIEKVYDDHKKKLMVIFPLANPDHERIIKPFLEKVRFNYIFSYERLKSYAVSDLALAKSGTNTLEIAASGTPMIVAYKVNIFSFIIIRLLIKIKYVTLINIIGNREIIPEFIQFNCEANLISDKLKELLLNPQEVDKQITESHKILQELGFKSNIYPSYLATKIIRQEFLK.

It belongs to the LpxB family.

It carries out the reaction a lipid X + a UDP-2-N,3-O-bis[(3R)-3-hydroxyacyl]-alpha-D-glucosamine = a lipid A disaccharide + UDP + H(+). The protein operates within bacterial outer membrane biogenesis; LPS lipid A biosynthesis. Functionally, condensation of UDP-2,3-diacylglucosamine and 2,3-diacylglucosamine-1-phosphate to form lipid A disaccharide, a precursor of lipid A, a phosphorylated glycolipid that anchors the lipopolysaccharide to the outer membrane of the cell. The protein is Lipid-A-disaccharide synthase of Rickettsia bellii (strain OSU 85-389).